The sequence spans 541 residues: DEAD-box ATP-dependent RNA helicase 57 (541 aa).

The segment covering Val-43–Pro-52 has biased composition (acidic residues). The tract at residues Val-43 to Val-72 is disordered. The Q motif signature appears at Glu-141–Arg-169. Residues Ile-172–Val-342 form the Helicase ATP-binding domain. Ala-185–Thr-192 is an ATP binding site. The DEAD box motif lies at Asp-289–Asp-292. The Helicase C-terminal domain occupies Ala-370–Lys-514. The tract at residues Lys-517–Glu-541 is disordered. Over residues Arg-525–Glu-541 the composition is skewed to basic and acidic residues.

It belongs to the DEAD box helicase family. DDX52/ROK1 subfamily.

The catalysed reaction is ATP + H2O = ADP + phosphate + H(+). The sequence is that of DEAD-box ATP-dependent RNA helicase 57 (RH57) from Arabidopsis thaliana (Mouse-ear cress).